The primary structure comprises 403 residues: Deubiquitinase and deneddylase Dub1 (403 aa).

The segment covering 1-11 (MLSPTNSTSKT) has biased composition (polar residues). A disordered region spans residues 1-24 (MLSPTNSTSKTAPVPPRDSSKPVL). The chain crosses the membrane as a helical span at residues 40–60 (TALAVLLVVVTLGLILLFYSF). Residues 77 to 132 (KEQPTISIPVPLPSPPLAVPRPSTPPAPTPAISRPSTPSAPKPSTPPPLLPKAPKP) form a disordered region. 2 stretches are compositionally biased toward pro residues: residues 86 to 105 (VPLP…PAPT) and 114 to 130 (PSAP…PKAP). Catalysis depends on residues H277, D294, and C347.

Belongs to the peptidase C48 family.

It is found in the secreted. Its subcellular location is the host cell. The protein resides in the membrane. Effector proteins function to alter host cell physiology and promote bacterial survival in host tissues. This protease possesses deubiquitinating and deneddylating activities. The protein is Deubiquitinase and deneddylase Dub1 (cdu1) of Chlamydia trachomatis serovar L2b (strain UCH-1/proctitis).